The chain runs to 488 residues: Glutamyl-tRNA(Gln) amidotransferase subunit A (488 aa).

Active-site charge relay system residues include lysine 77 and serine 152. Serine 176 serves as the catalytic Acyl-ester intermediate.

Belongs to the amidase family. GatA subfamily. As to quaternary structure, heterotrimer of A, B and C subunits.

The catalysed reaction is L-glutamyl-tRNA(Gln) + L-glutamine + ATP + H2O = L-glutaminyl-tRNA(Gln) + L-glutamate + ADP + phosphate + H(+). Allows the formation of correctly charged Gln-tRNA(Gln) through the transamidation of misacylated Glu-tRNA(Gln) in organisms which lack glutaminyl-tRNA synthetase. The reaction takes place in the presence of glutamine and ATP through an activated gamma-phospho-Glu-tRNA(Gln). This chain is Glutamyl-tRNA(Gln) amidotransferase subunit A, found in Streptococcus equi subsp. zooepidemicus (strain H70).